The sequence spans 257 residues: MNDIWWQTIGEGDCHLVLLHGWGLNAQVWDCITPQLASHFTLHLVDLPGYGRSGGYGAMSLEAMAQRVLEQAPPQAVWLGWSLGGLVASQVAMMHPERVQALVTVASSPCFAACDDWPGIKPEVLAGFQQQLSDDFQRTVERFLALQTMGTESARQDARALKQAVLSLPMPSAEALNGGLEILRTVDLRQALVGLPIPFLRLYGRLDGLVPRKIVPLLDELWPESESILFDKAAHAPFVSHPAAFCEPLLALKTQLG.

The 227-residue stretch at 15-241 (HLVLLHGWGL…KAAHAPFVSH (227 aa)) folds into the AB hydrolase-1 domain. Substrate is bound by residues W22, 82-83 (SL), and 143-147 (FLALQ). Residue S82 is the Nucleophile of the active site. Catalysis depends on residues D207 and H235. H235 contacts substrate.

The protein belongs to the AB hydrolase superfamily. Carboxylesterase BioH family. As to quaternary structure, monomer.

It localises to the cytoplasm. The enzyme catalyses 6-carboxyhexanoyl-[ACP] methyl ester + H2O = 6-carboxyhexanoyl-[ACP] + methanol + H(+). It participates in cofactor biosynthesis; biotin biosynthesis. Its function is as follows. The physiological role of BioH is to remove the methyl group introduced by BioC when the pimeloyl moiety is complete. It allows to synthesize pimeloyl-ACP via the fatty acid synthetic pathway through the hydrolysis of the ester bonds of pimeloyl-ACP esters. The chain is Pimeloyl-[acyl-carrier protein] methyl ester esterase from Klebsiella pneumoniae (strain 342).